A 298-amino-acid chain; its full sequence is Diphthine methyl ester synthase (298 aa).

S-adenosyl-L-methionine-binding positions include leucine 9, aspartate 85, glycine 88, serine 113–valine 114, leucine 164, leucine 222, and histidine 247.

Belongs to the diphthine synthase family.

The protein resides in the cytoplasm. It catalyses the reaction 2-[(3S)-amino-3-carboxypropyl]-L-histidyl-[translation elongation factor 2] + 4 S-adenosyl-L-methionine = diphthine methyl ester-[translation elongation factor 2] + 4 S-adenosyl-L-homocysteine + 3 H(+). The protein operates within protein modification; peptidyl-diphthamide biosynthesis. In terms of biological role, S-adenosyl-L-methionine-dependent methyltransferase that catalyzes four methylations of the modified target histidine residue in translation elongation factor 2 (EF-2), to form an intermediate called diphthine methyl ester. The four successive methylation reactions represent the second step of diphthamide biosynthesis. This chain is Diphthine methyl ester synthase (DPH5), found in Candida glabrata (strain ATCC 2001 / BCRC 20586 / JCM 3761 / NBRC 0622 / NRRL Y-65 / CBS 138) (Yeast).